The chain runs to 338 residues: Ferrochelatase (338 aa).

Fe cation is bound by residues His210 and Glu291.

Belongs to the ferrochelatase family.

It localises to the cytoplasm. It carries out the reaction heme b + 2 H(+) = protoporphyrin IX + Fe(2+). Its pathway is porphyrin-containing compound metabolism; protoheme biosynthesis; protoheme from protoporphyrin-IX: step 1/1. Functionally, catalyzes the ferrous insertion into protoporphyrin IX. This is Ferrochelatase from Helicobacter acinonychis (strain Sheeba).